Reading from the N-terminus, the 122-residue chain is Fluoride-specific ion channel FluC (122 aa).

4 helical membrane-spanning segments follow: residues L6–V26, S33–F53, G60–F80, and L101–F121. The Na(+) site is built by G75 and T78.

It belongs to the fluoride channel Fluc/FEX (TC 1.A.43) family.

It localises to the cell inner membrane. It carries out the reaction fluoride(in) = fluoride(out). With respect to regulation, na(+) is not transported, but it plays an essential structural role and its presence is essential for fluoride channel function. Functionally, fluoride-specific ion channel. Important for reducing fluoride concentration in the cell, thus reducing its toxicity. The protein is Fluoride-specific ion channel FluC of Campylobacter jejuni subsp. jejuni serotype O:2 (strain ATCC 700819 / NCTC 11168).